Here is a 676-residue protein sequence, read N- to C-terminus: Ribosome quality control complex subunit TCF25 (676 aa).

2 disordered regions span residues 1–59 (MSRR…VRVN) and 85–147 (LTDA…ENGL). Basic residues predominate over residues 123-136 (GKLRKKKKKQKNKK). Ser602 bears the Phosphoserine mark.

Belongs to the TCF25 family. Component of the ribosome quality control complex (RQC), composed of the E3 ubiquitin ligase LTN1, TCF25 and NEMF associated with the 60S ribosomal subunit. Interacts (via C-terminus) with NFATC4; the interaction leads to suppresson of NFATC4 transcription factor activity and is reduced following stimulation with angiotensin-2. Interacts with XIAP. In the embryo, widely expressed with highest levels in brain. In the adult, highest expression is found in the heart. Repressed in cardiac tissue of patients with heart failure (at protein level). mRNA levels in the heart are unchanged in patients with heart failure.

The protein localises to the nucleus. It is found in the cytoplasm. It localises to the cytosol. Functionally, component of the ribosome quality control complex (RQC), a ribosome-associated complex that mediates ubiquitination and extraction of incompletely synthesized nascent chains for proteasomal degradation. In the RQC complex, required to promote formation of 'Lys-48'-linked polyubiquitin chains during ubiquitination of incompletely synthesized proteins by LTN1. May negatively regulate the calcineurin-NFAT signaling cascade by suppressing the activity of transcription factor NFATC4. May play a role in cell death control. This is Ribosome quality control complex subunit TCF25 from Homo sapiens (Human).